The following is a 75-amino-acid chain: Peptide Ctri10033 (75 aa).

Positions 1-22 (MNSKYLFVFLILIVTFTDLCQG) are cleaved as a signal peptide. Arginine amide is present on arginine 43. Positions 47 to 75 (ELGSQYDYLQDFRKRELDLDDLLSKFPDY) are excised as a propeptide.

The protein belongs to the non-disulfide-bridged peptide (NDBP) superfamily. Short antimicrobial peptide (group 4) family. In terms of tissue distribution, expressed by the venom gland.

It localises to the secreted. The sequence is that of Peptide Ctri10033 from Chaerilus tricostatus (Scorpion).